A 431-amino-acid polypeptide reads, in one-letter code: Gamma-glutamyl phosphate reductase (431 aa).

This sequence belongs to the gamma-glutamyl phosphate reductase family.

It localises to the cytoplasm. The catalysed reaction is L-glutamate 5-semialdehyde + phosphate + NADP(+) = L-glutamyl 5-phosphate + NADPH + H(+). The protein operates within amino-acid biosynthesis; L-proline biosynthesis; L-glutamate 5-semialdehyde from L-glutamate: step 2/2. In terms of biological role, catalyzes the NADPH-dependent reduction of L-glutamate 5-phosphate into L-glutamate 5-semialdehyde and phosphate. The product spontaneously undergoes cyclization to form 1-pyrroline-5-carboxylate. The protein is Gamma-glutamyl phosphate reductase of Methylobacterium sp. (strain 4-46).